The sequence spans 299 residues: Nucleotide-binding protein glr4163 (299 aa).

18 to 25 (SPAGAGRT) lines the ATP pocket.

It belongs to the RapZ-like family.

Displays ATPase and GTPase activities. This Gloeobacter violaceus (strain ATCC 29082 / PCC 7421) protein is Nucleotide-binding protein glr4163.